Here is a 496-residue protein sequence, read N- to C-terminus: uncharacterized protein (496 aa).

Positions 1–19 are cleaved as a signal peptide; that stretch reads MTTGYILIAAILILGGVIA. A helical membrane pass occupies residues 45-67; sequence AVLVTILTGGLVSATTLAILFIA. The interval 113–137 is disordered; sequence LETTRTDKKQVETQRDQAKKEKLKA.

The protein resides in the membrane. This is an uncharacterized protein from Nostoc sp. (strain PCC 7120 / SAG 25.82 / UTEX 2576).